An 88-amino-acid polypeptide reads, in one-letter code: Small ribosomal subunit protein bS16c (88 aa).

This sequence belongs to the bacterial ribosomal protein bS16 family.

Its subcellular location is the plastid. It localises to the chloroplast. This Helianthus annuus (Common sunflower) protein is Small ribosomal subunit protein bS16c.